Consider the following 268-residue polypeptide: 3-methyl-2-oxobutanoate hydroxymethyltransferase (268 aa).

Residues Asp44 and Asp83 each contribute to the Mg(2+) site. Residues Asp44–Ser45, Asp83, and Lys113 each bind 3-methyl-2-oxobutanoate. Residue Glu115 coordinates Mg(2+). Glu182 acts as the Proton acceptor in catalysis.

The protein belongs to the PanB family. Homodecamer; pentamer of dimers. Requires Mg(2+) as cofactor.

It is found in the cytoplasm. It carries out the reaction 3-methyl-2-oxobutanoate + (6R)-5,10-methylene-5,6,7,8-tetrahydrofolate + H2O = 2-dehydropantoate + (6S)-5,6,7,8-tetrahydrofolate. It participates in cofactor biosynthesis; (R)-pantothenate biosynthesis; (R)-pantoate from 3-methyl-2-oxobutanoate: step 1/2. Its function is as follows. Catalyzes the reversible reaction in which hydroxymethyl group from 5,10-methylenetetrahydrofolate is transferred onto alpha-ketoisovalerate to form ketopantoate. In Synechococcus elongatus (strain ATCC 33912 / PCC 7942 / FACHB-805) (Anacystis nidulans R2), this protein is 3-methyl-2-oxobutanoate hydroxymethyltransferase.